The sequence spans 252 residues: Imidazole glycerol phosphate synthase subunit HisF (252 aa).

Active-site residues include aspartate 11 and aspartate 130.

Belongs to the HisA/HisF family. In terms of assembly, heterodimer of HisH and HisF.

It localises to the cytoplasm. It catalyses the reaction 5-[(5-phospho-1-deoxy-D-ribulos-1-ylimino)methylamino]-1-(5-phospho-beta-D-ribosyl)imidazole-4-carboxamide + L-glutamine = D-erythro-1-(imidazol-4-yl)glycerol 3-phosphate + 5-amino-1-(5-phospho-beta-D-ribosyl)imidazole-4-carboxamide + L-glutamate + H(+). The protein operates within amino-acid biosynthesis; L-histidine biosynthesis; L-histidine from 5-phospho-alpha-D-ribose 1-diphosphate: step 5/9. Its function is as follows. IGPS catalyzes the conversion of PRFAR and glutamine to IGP, AICAR and glutamate. The HisF subunit catalyzes the cyclization activity that produces IGP and AICAR from PRFAR using the ammonia provided by the HisH subunit. In Polynucleobacter asymbioticus (strain DSM 18221 / CIP 109841 / QLW-P1DMWA-1) (Polynucleobacter necessarius subsp. asymbioticus), this protein is Imidazole glycerol phosphate synthase subunit HisF.